A 203-amino-acid chain; its full sequence is Probable nicotinate-nucleotide adenylyltransferase (203 aa).

The protein belongs to the NadD family.

The catalysed reaction is nicotinate beta-D-ribonucleotide + ATP + H(+) = deamido-NAD(+) + diphosphate. The protein operates within cofactor biosynthesis; NAD(+) biosynthesis; deamido-NAD(+) from nicotinate D-ribonucleotide: step 1/1. Functionally, catalyzes the reversible adenylation of nicotinate mononucleotide (NaMN) to nicotinic acid adenine dinucleotide (NaAD). This Clostridium kluyveri (strain ATCC 8527 / DSM 555 / NBRC 12016 / NCIMB 10680 / K1) protein is Probable nicotinate-nucleotide adenylyltransferase.